We begin with the raw amino-acid sequence, 134 residues long: uncharacterized protein (134 aa).

This is an uncharacterized protein from Saccharomyces cerevisiae (strain ATCC 204508 / S288c) (Baker's yeast).